The chain runs to 370 residues: MEEQTILRKFEHIKHCLTKNVEAHVTNGFEDVHLIHKSLPEIDKDEIDLSVKFLGRKFDYPIMITGMTGGTRKGEIAWRINRTLAQAAQELNIPLGLGSQRAMIEKPETWESYYVRDVAPDVFLVGNLGAPQFGRNAKKRYSVDEVLYAIEKIEADAIAIHMNPLQESIQPEGDTTFSGVLEALAEITSTIDYPVIAKETGAGVSKEVAVELEAVGVDAIDISGLGGTSWSAVEYYRTKDGEKRNLALKFWDWGIKTAISLAEVRWATNLPIIASGGMRDGITMAKALAMGASMVGIALPVLRPAAKGDVEGVIRIIKGYAEEIRNVMFLVGARNIKELRKVPLVITGFVREWLLQRIDLNSYLRARFKM.

8-9 (RK) contributes to the substrate binding site. Residues Thr65, 66 to 68 (GMT), Ser99, and Asn127 contribute to the FMN site. 99–101 (SQR) contacts substrate. Gln166 lines the substrate pocket. Glu167 lines the Mg(2+) pocket. Residues Lys198, Ser223, Thr228, 277–279 (GMR), and 298–299 (AL) contribute to the FMN site.

This sequence belongs to the IPP isomerase type 2 family. As to quaternary structure, homooctamer. Dimer of tetramers. FMN is required as a cofactor. The cofactor is NADPH. Mg(2+) serves as cofactor.

Its subcellular location is the cytoplasm. It catalyses the reaction isopentenyl diphosphate = dimethylallyl diphosphate. Functionally, involved in the biosynthesis of isoprenoids. Catalyzes the 1,3-allylic rearrangement of the homoallylic substrate isopentenyl (IPP) to its allylic isomer, dimethylallyl diphosphate (DMAPP). The chain is Isopentenyl-diphosphate delta-isomerase from Pyrococcus abyssi (strain GE5 / Orsay).